A 318-amino-acid chain; its full sequence is Cytochrome c biogenesis protein CcsA (318 aa).

The next 8 membrane-spanning stretches (helical) occupy residues 17-37 (VLAL…ISFW), 45-65 (SAVV…QLVL), 75-95 (ISNL…AQLL), 104-124 (IVSA…SFAL), 149-169 (VIMC…AVLF), 224-244 (TITV…VWAN), 258-275 (TWAL…HTRF), and 287-307 (VAVA…LLGI).

It belongs to the CcmF/CycK/Ccl1/NrfE/CcsA family. In terms of assembly, may interact with ccs1.

Its subcellular location is the cellular thylakoid membrane. Its function is as follows. Required during biogenesis of c-type cytochromes (cytochrome c6 and cytochrome f) at the step of heme attachment. In Prochlorococcus marinus (strain MIT 9313), this protein is Cytochrome c biogenesis protein CcsA.